Reading from the N-terminus, the 511-residue chain is Xylose import ATP-binding protein XylG (511 aa).

ABC transporter domains lie at 6–244 (LEMR…VGRE) and 261–506 (FEAR…IGKP).

Belongs to the ABC transporter superfamily. Xylose importer (TC 3.A.1.2.4) family. As to quaternary structure, the complex is composed of two ATP-binding proteins (XylG), two transmembrane proteins (XylH) and a solute-binding protein (XylF).

It is found in the cell inner membrane. It catalyses the reaction D-xylose(out) + ATP + H2O = D-xylose(in) + ADP + phosphate + H(+). In terms of biological role, part of the ABC transporter complex XylFGH involved in xylose import. Responsible for energy coupling to the transport system. The protein is Xylose import ATP-binding protein XylG of Brucella melitensis biotype 1 (strain ATCC 23456 / CCUG 17765 / NCTC 10094 / 16M).